A 197-amino-acid chain; its full sequence is Peptide deformylase (197 aa).

2 residues coordinate Fe cation: cysteine 106 and histidine 148. Residue glutamate 149 is part of the active site. Histidine 152 is a Fe cation binding site.

It belongs to the polypeptide deformylase family. Fe(2+) serves as cofactor.

The enzyme catalyses N-terminal N-formyl-L-methionyl-[peptide] + H2O = N-terminal L-methionyl-[peptide] + formate. Functionally, removes the formyl group from the N-terminal Met of newly synthesized proteins. Requires at least a dipeptide for an efficient rate of reaction. N-terminal L-methionine is a prerequisite for activity but the enzyme has broad specificity at other positions. This Mycobacterium leprae (strain TN) protein is Peptide deformylase.